Consider the following 491-residue polypeptide: uncharacterized protein (491 aa).

The next 12 helical transmembrane spans lie at 48 to 68, 85 to 105, 112 to 132, 140 to 160, 174 to 194, 202 to 222, 277 to 297, 317 to 337, 358 to 378, 383 to 403, 408 to 428, and 455 to 475; these read LILVSAFALLGPMASSMVAPC, ALILSIYLLVFAISPMISAPL, RMLLQVGNVIFIVFNMACGLA, IFRFLAGFGSATPMGLGSGTI, AVMSLAPLLGPTIGPVVSGFI, WIFWSTTIFSGFIFALSLPLL, PIVILCSTYMAIQYGILYLVL, LNYIASGIGLIFGSQASGIFI, VPVILLGTFFFPAGLFIYGWT, THWIGPDIGAAMFNIGLMLGW, TYLIDSFMIYAASSTAVACCV, and LLAFIVLGSSIITCSLLWFGG.

This sequence belongs to the major facilitator superfamily.

It is found in the membrane. This is an uncharacterized protein from Schizosaccharomyces pombe (strain 972 / ATCC 24843) (Fission yeast).